A 138-amino-acid chain; its full sequence is Basic phospholipase A2 canebraxin B (138 aa).

The signal sequence occupies residues 1 to 16 (MRALWIVAVLLVAVEG). 7 cysteine pairs are disulfide-bonded: Cys42–Cys131, Cys44–Cys60, Cys59–Cys111, Cys65–Cys138, Cys66–Cys104, Cys73–Cys97, and Cys91–Cys102. Ca(2+) contacts are provided by Tyr43, Gly45, and Gly47. His63 is a catalytic residue. Asp64 contacts Ca(2+). The active site involves Asp105.

This sequence belongs to the phospholipase A2 family. Group II subfamily. In terms of assembly, heterodimer of an acidic subunit and a basic chain. The acidic subunit is non-toxic, without enzymatic activity and comprises 3 peptides that are cross-linked by 7 disulfide bridges. The basic subunit is toxic, has phospholipase A2 activity and is composed of a single chain. The cofactor is Ca(2+). As to expression, expressed by the venom gland.

The protein localises to the secreted. The enzyme catalyses a 1,2-diacyl-sn-glycero-3-phosphocholine + H2O = a 1-acyl-sn-glycero-3-phosphocholine + a fatty acid + H(+). In terms of biological role, snake venom phospholipase A2 (PLA2) that shows presynaptic neurotoxicity. PLA2 catalyzes the calcium-dependent hydrolysis of the 2-acyl groups in 3-sn-phosphoglycerides. The protein is Basic phospholipase A2 canebraxin B of Crotalus horridus (Timber rattlesnake).